Consider the following 282-residue polypeptide: Reaction center protein L chain (282 aa).

3 helical membrane passes run 33 to 56, 85 to 113, and 116 to 141; these read GFFG…GAAM, GLWQ…RKLG, and FHIP…MMMG. 2 residues coordinate (7R,8Z)-bacteriochlorophyll b: His154 and His174. The chain crosses the membrane as a helical span at residues 171-200; that stretch reads NPFHMLGISLFFTTAWALAMHGALVLSAAN. Position 191 (His191) interacts with Fe cation. Position 217 (Phe217) interacts with a ubiquinone. A helical transmembrane segment spans residues 226–252; sequence GTLGIHRLGLLLALNAVFWSACCMLVS. His231 is a binding site for Fe cation.

The protein belongs to the reaction center PufL/M/PsbA/D family. In terms of assembly, reaction center is composed of four bacteriochlorophylls, two bacteriopheophytins, two ubiquinones, one iron, and three highly hydrophobic polypeptide chains (designated L, M, and H).

It localises to the cellular chromatophore membrane. The reaction center is a membrane-bound complex that mediates the initial photochemical event in the electron transfer process of photosynthesis. The chain is Reaction center protein L chain (pufL) from Rhodobacter capsulatus (Rhodopseudomonas capsulata).